Reading from the N-terminus, the 611-residue chain is Calmegin (611 aa).

The N-terminal stretch at 1-19 (MRFQGVGLCLGLLFITVNA) is a signal peptide. The Lumenal portion of the chain corresponds to 20 to 471 (DFMDDGVEVE…LVIAAEERPW (452 aa)). At Lys128 the chain carries N6-acetyllysine. The cysteines at positions 151 and 185 are disulfide-linked. The disordered stretch occupies residues 254–335 (LDDVVPPINP…KAEKPEDWSD (82 aa)). Residues 265–284 (REIDDPSDKKPEEWDDRAKI) show a composition bias toward basic and acidic residues. Tandem repeats lie at residues 267 to 280 (IDDP…EWDD), 284 to 297 (IPDP…DWDE), 303 to 316 (IEDS…GWLD), 322 to 335 (IPNP…DWSD), 339 to 352 (GEWE…PACQ), 356 to 369 (GEWK…PKYK), 370 to 383 (GIWR…PNYQ), and 384 to 397 (GLWS…PDYF). Positions 317 to 350 (DEPKFIPNPKAEKPEDWSDDMDGEWEAPHIPNPA) are interaction with PPIB. Cys351 and Cys355 are joined by a disulfide. The chain crosses the membrane as a helical span at residues 472–492 (LWLMYLVMAGLPVALVASFCW). Residues 493 to 611 (PRKVKKKYED…SLRKRRVRKD (119 aa)) are Cytoplasmic-facing. The disordered stretch occupies residues 517–611 (AALEQEAEEE…SLRKRRVRKD (95 aa)). Positions 526 to 584 (EKAPEKPEDVQEEKKPGEAEVVTVEKEVIGEPEEKSKEDRETLEGQEEVSKLSKSGSED) are enriched in basic and acidic residues. Phosphoserine occurs at positions 561, 578, 580, 582, 592, 595, and 602. A compositionally biased stretch (basic residues) spans 602-611 (SLRKRRVRKD).

The protein belongs to the calreticulin family. In terms of assembly, interacts with PDILT and PPIB. Interacts with ADAM2. Interacts with ADAM1A, ADAM1B and ADAM3; these are protein-coding genes in mouse but may be pseudogenes in other organisms. Detected in testis (at protein level). Detected in testis.

It localises to the endoplasmic reticulum membrane. Its function is as follows. Functions during spermatogenesis as a chaperone for a range of client proteins that are important for sperm adhesion onto the egg zona pellucida and for subsequent penetration of the zona pellucida. Required for normal sperm migration from the uterus into the oviduct. Required for normal male fertility. Binds calcium ions. This chain is Calmegin (Clgn), found in Mus musculus (Mouse).